We begin with the raw amino-acid sequence, 361 residues long: Deoxyribonuclease (361 aa).

Residues 1–24 form the signal peptide; that stretch reads MMHLLRRGAFAILLIVLLPSAALA. Histidine 149 is an active-site residue.

It belongs to the DNase I family. Mg(2+) is required as a cofactor. It depends on Ca(2+) as a cofactor.

The protein localises to the secreted. DNA nuclease able to digest short and long DNA substrate. Is resistant to ionic strength and thus active at high salt concentration. In Thioalkalivibrio sp. (strain K90mix), this protein is Deoxyribonuclease.